A 486-amino-acid chain; its full sequence is FAD-dependent oxidoreductase domain-containing protein 1 (486 aa).

Residues 62–82 (EHSDVVIVGGGVLGLSVAYWL) form a helical membrane-spanning segment.

Associates with components of the mitochondrial respiratory chain complex I. The cofactor is FAD.

It localises to the mitochondrion inner membrane. In terms of biological role, required for the assembly of the mitochondrial membrane respiratory chain NADH dehydrogenase (Complex I). Involved in mid-late stages of complex I assembly. In Homo sapiens (Human), this protein is FAD-dependent oxidoreductase domain-containing protein 1.